Reading from the N-terminus, the 377-residue chain is Histone deacetylase 8 (377 aa).

The interval 14–324 (LPPVYIYSPE…WTYLTGVILG (311 aa)) is histone deacetylase. Serine 39 carries the phosphoserine modification. Residue aspartate 101 coordinates substrate. Histidine 143 serves as the catalytic Proton acceptor. Substrate is bound at residue glycine 151. Residues aspartate 178, histidine 180, and aspartate 267 each contribute to the a divalent metal cation site. Tyrosine 306 provides a ligand contact to substrate.

Belongs to the histone deacetylase family. HD type 1 subfamily. In terms of assembly, interacts with CBFA2T3. Interacts with phosphorylated SMG5/EST1B; this interaction protects SMG5 from ubiquitin-mediated degradation. Associates with alpha-SMA (smooth muscle alpha-actin). Requires a divalent metal cation as cofactor. In terms of processing, phosphorylated by PKA on serine 39. Phosphorylation reduces deacetylase activity observed preferentially on histones H3 and H4.

The protein localises to the nucleus. Its subcellular location is the chromosome. The protein resides in the cytoplasm. The enzyme catalyses N(6)-acetyl-L-lysyl-[histone] + H2O = L-lysyl-[histone] + acetate. It catalyses the reaction N(6)-acetyl-L-lysyl-[protein] + H2O = L-lysyl-[protein] + acetate. It carries out the reaction N(6)-(2E)-butenoyl-L-lysyl-[protein] + H2O = (2E)-2-butenoate + L-lysyl-[protein]. Its activity is inhibited by trichostatin A (TSA) and butyrate, 2 well known histone deacetylase inhibitors. Histone deacetylase that catalyzes the deacetylation of lysine residues on the N-terminal part of the core histones (H2A, H2B, H3 and H4). Histone deacetylation gives a tag for epigenetic repression and plays an important role in transcriptional regulation, cell cycle progression and developmental events. Histone deacetylases act via the formation of large multiprotein complexes. Also involved in the deacetylation of cohesin complex protein SMC3 regulating release of cohesin complexes from chromatin. May play a role in smooth muscle cell contractility. In addition to protein deacetylase activity, also has protein-lysine deacylase activity: acts as a protein decrotonylase by mediating decrotonylation ((2E)-butenoyl) of histones. This chain is Histone deacetylase 8 (Hdac8), found in Rattus norvegicus (Rat).